A 233-amino-acid polypeptide reads, in one-letter code: Small ribosomal subunit protein uS3 (233 aa).

In terms of domain architecture, KH type-2 spans 39-107 (VRQFLMKKLV…PAQINISEVR (69 aa)).

It belongs to the universal ribosomal protein uS3 family. Part of the 30S ribosomal subunit. Forms a tight complex with proteins S10 and S14.

Its function is as follows. Binds the lower part of the 30S subunit head. Binds mRNA in the 70S ribosome, positioning it for translation. The sequence is that of Small ribosomal subunit protein uS3 from Buchnera aphidicola subsp. Schizaphis graminum (strain Sg).